We begin with the raw amino-acid sequence, 502 residues long: Calnexin homolog (502 aa).

An N-terminal signal peptide occupies residues 1–19 (MKFSAYLWWLFLNLALVKG). The Lumenal portion of the chain corresponds to 20–481 (TSLLSNVTLA…IDRILEQPLK (462 aa)). N-linked (GlcNAc...) asparagine glycosylation is found at asparagine 25 and asparagine 104. Cysteine 125 and cysteine 161 are joined by a disulfide. An alpha-D-glucoside contacts are provided by lysine 131 and aspartate 159. A p domain (Extended arm) region spans residues 248 to 381 (IPDVSVAKPH…PEIENPLYYE (134 aa)). Repeat copies occupy residues 250–261 (DVSVAKPHDWDD), 267–278 (DPEAVKLSDRDE), 286–297 (HPDGTEPPEWNS), 305–316 (DPNAQKPSWWKE), and 320–330 (GEWIPPMIKNP). 2 4 X approximate repeats regions span residues 250–316 (DVSV…WWKE) and 320–377 (GEWI…IENP). An N-linked (GlcNAc...) asparagine glycan is attached at asparagine 296. Cysteine 332 and cysteine 338 are joined by a disulfide. Tandem repeats lie at residues 339-349 (GQQIPGLINNA), 353-363 (GPGELNEIINP), and 367-377 (GEWHPPEIENP). Residue glutamate 398 coordinates an alpha-D-glucoside. Residues asparagine 416 and asparagine 425 are each glycosylated (N-linked (GlcNAc...) asparagine). Residues 482–502 (FVLTAAVVLLTTSVLCCVVFT) form a helical membrane-spanning segment.

This sequence belongs to the calreticulin family. Interacts with MPD1.

It is found in the endoplasmic reticulum membrane. In terms of biological role, interacts with newly synthesized monoglucosylated glycoproteins in the endoplasmic reticulum. It may act in assisting protein assembly and/or in the retention within the ER of unassembled protein subunits. It seems to play a major role in the quality control apparatus of the ER by the retention of incorrectly folded proteins. The sequence is that of Calnexin homolog (CNE1) from Saccharomyces cerevisiae (strain ATCC 204508 / S288c) (Baker's yeast).